The primary structure comprises 368 residues: mRNA export factor (368 aa).

The interval 15–34 (TSMFGSTTTDNHNPMKDIEV) is disordered. 7 WD repeats span residues 37 to 79 (SPDD…QTIP), 84 to 114 (MHTG…KMWD), 125 to 157 (QHDA…KFWD), 168 to 206 (QLPE…EFRR), 215 to 255 (HRCV…KDNF), 271 to 301 (QDIY…SFWD), and 310 to 346 (TSEQ…EFYN). T229 is subject to Phosphothreonine.

It belongs to the WD repeat rae1 family. As to quaternary structure, interacts with NUMA1 (via N-terminal end of the coiled-coil domain); this interaction promotes spindle formation in mitosis. Interacts with NUP98. Interacts with MYCBP2. Interacts with USP11.

Its subcellular location is the cytoplasm. The protein resides in the nucleus. The protein localises to the cytoskeleton. It localises to the spindle pole. Functionally, plays a role in mitotic bipolar spindle formation. Binds mRNA. May function in nucleocytoplasmic transport and in directly or indirectly attaching cytoplasmic mRNPs to the cytoskeleton. This Mus musculus (Mouse) protein is mRNA export factor (Rae1).